The sequence spans 136 residues: Transcription antitermination protein NusB (136 aa).

The protein belongs to the NusB family.

Involved in transcription antitermination. Required for transcription of ribosomal RNA (rRNA) genes. Binds specifically to the boxA antiterminator sequence of the ribosomal RNA (rrn) operons. In Paenarthrobacter aurescens (strain TC1), this protein is Transcription antitermination protein NusB.